The following is a 162-amino-acid chain: UPF0262 protein AZC_3148 (162 aa).

Belongs to the UPF0262 family.

The protein is UPF0262 protein AZC_3148 of Azorhizobium caulinodans (strain ATCC 43989 / DSM 5975 / JCM 20966 / LMG 6465 / NBRC 14845 / NCIMB 13405 / ORS 571).